We begin with the raw amino-acid sequence, 233 residues long: Large ribosomal subunit protein uL1 (233 aa).

It belongs to the universal ribosomal protein uL1 family. Part of the 50S ribosomal subunit.

Binds directly to 23S rRNA. The L1 stalk is quite mobile in the ribosome, and is involved in E site tRNA release. Its function is as follows. Protein L1 is also a translational repressor protein, it controls the translation of the L11 operon by binding to its mRNA. The chain is Large ribosomal subunit protein uL1 from Shewanella pealeana (strain ATCC 700345 / ANG-SQ1).